The chain runs to 317 residues: Beta-ketoacyl-[acyl-carrier-protein] synthase III (317 aa).

Catalysis depends on residues C112 and H244. Positions 245 to 249 are ACP-binding; sequence QANLR. Residue N274 is part of the active site.

It belongs to the thiolase-like superfamily. FabH family. As to quaternary structure, homodimer.

The protein localises to the cytoplasm. It carries out the reaction malonyl-[ACP] + acetyl-CoA + H(+) = 3-oxobutanoyl-[ACP] + CO2 + CoA. The protein operates within lipid metabolism; fatty acid biosynthesis. Catalyzes the condensation reaction of fatty acid synthesis by the addition to an acyl acceptor of two carbons from malonyl-ACP. Catalyzes the first condensation reaction which initiates fatty acid synthesis and may therefore play a role in governing the total rate of fatty acid production. Possesses both acetoacetyl-ACP synthase and acetyl transacylase activities. Its substrate specificity determines the biosynthesis of branched-chain and/or straight-chain of fatty acids. The protein is Beta-ketoacyl-[acyl-carrier-protein] synthase III of Salmonella paratyphi A (strain ATCC 9150 / SARB42).